We begin with the raw amino-acid sequence, 203 residues long: MFEGPVQDLIDELGKLPGIGPKSAQRIAFHLLSVEPPDIDRLTAVLNKVRDGVTFCAVCGNVSDEERCRICGDARRDASLICVVEEPKDVQAVERTREFRGRYHVLGGALDPLSGIGPDQLRIRELLNRIGERVDGVEVAEVIIATDPNTEGEATATYLVRMLRDIPGLTVTRIASGLPMGGDLEFADELTLGRALAGRRAMA.

The C4-type zinc finger occupies 56 to 71 (CAVCGNVSDEERCRIC). Residues 79–179 (SLICVVEEPK…TVTRIASGLP (101 aa)) enclose the Toprim domain.

Belongs to the RecR family.

In terms of biological role, may play a role in DNA repair. It seems to be involved in an RecBC-independent recombinational process of DNA repair. It may act with RecF and RecO. The chain is Recombination protein RecR from Mycolicibacterium vanbaalenii (strain DSM 7251 / JCM 13017 / BCRC 16820 / KCTC 9966 / NRRL B-24157 / PYR-1) (Mycobacterium vanbaalenii).